We begin with the raw amino-acid sequence, 187 residues long: UPF0200 protein MA_4660 (187 aa).

9-16 (GMPASGKS) is a binding site for ATP.

It belongs to the UPF0200 family.

This chain is UPF0200 protein MA_4660, found in Methanosarcina acetivorans (strain ATCC 35395 / DSM 2834 / JCM 12185 / C2A).